Here is a 385-residue protein sequence, read N- to C-terminus: Cytochrome b (385 aa).

Transmembrane regions (helical) follow at residues 32–52 (FGSL…TLAM), 76–98 (WFIR…AHMG), 113–133 (PWSI…MGYV), and 179–199 (FFAL…LHLI). Positions 82 and 96 each coordinate heme b. Heme b-binding residues include His-183 and His-197. Residue His-202 participates in a ubiquinone binding. The next 4 helical transmembrane spans lie at 225–245 (YSFK…LFVF), 289–309 (LGGV…PIVD), 321–341 (ISKL…VLGQ), and 348–368 (FIVL…ILLP).

It belongs to the cytochrome b family. Fungal cytochrome b-c1 complex contains 10 subunits; 3 respiratory subunits, 2 core proteins and 5 low-molecular weight proteins. Cytochrome b-c1 complex is a homodimer. The cofactor is heme b.

The protein localises to the mitochondrion inner membrane. In terms of biological role, component of the ubiquinol-cytochrome c reductase complex (complex III or cytochrome b-c1 complex) that is part of the mitochondrial respiratory chain. The b-c1 complex mediates electron transfer from ubiquinol to cytochrome c. Contributes to the generation of a proton gradient across the mitochondrial membrane that is then used for ATP synthesis. The polypeptide is Cytochrome b (COB) (Yarrowia lipolytica (strain CLIB 122 / E 150) (Yeast)).